We begin with the raw amino-acid sequence, 166 residues long: Large ribosomal subunit protein uL10 (166 aa).

The protein belongs to the universal ribosomal protein uL10 family. As to quaternary structure, part of the ribosomal stalk of the 50S ribosomal subunit. The N-terminus interacts with L11 and the large rRNA to form the base of the stalk. The C-terminus forms an elongated spine to which L12 dimers bind in a sequential fashion forming a multimeric L10(L12)X complex.

Functionally, forms part of the ribosomal stalk, playing a central role in the interaction of the ribosome with GTP-bound translation factors. This is Large ribosomal subunit protein uL10 from Pseudomonas putida (strain W619).